Reading from the N-terminus, the 145-residue chain is Procyclic form-specific polypeptide B-alpha (145 aa).

A signal peptide spans 1-27; that stretch reads MAPRSLYLLAVLLFSANLFAGVGFAAA. The tract at residues 28–127 is disordered; sequence AEGPEDKGLT…PEPEPGAATL (100 aa). Over residues 31-52 the composition is skewed to basic and acidic residues; it reads PEDKGLTKGGKGKGEKGTKVGA. 32 tandem repeats follow at residues 59–60, 61–62, 63–64, 65–66, 67–68, 69–70, 71–72, 73–74, 75–76, 77–78, 79–80, 81–82, 83–84, 85–86, 87–88, 89–90, 91–92, 93–94, 95–96, 97–98, 99–100, 101–102, 103–104, 105–106, 107–108, 109–110, 111–112, 113–114, 115–116, 117–118, 119–120, and 121–122. Residues 59–122 form a 32 X 2 AA tandem repeats of [DE]-P region; sequence DPDPEPEPEP…EPEPEPEPEP (64 aa). The span at 60-120 shows a compositional bias: acidic residues; the sequence is PDPEPEPEPE…EPEPEPEPEP (61 aa). G123 carries GPI-anchor amidated glycine lipidation. A propeptide spanning residues 124-145 is cleaved from the precursor; it reads AATLKSVALPFAIAAAALVAAF.

It localises to the cell membrane. Major surface antigen of procyclic forms. This is Procyclic form-specific polypeptide B-alpha (PARPB) from Trypanosoma brucei brucei.